Consider the following 90-residue polypeptide: MSRTIFCTFLQRDAEGQDFQLYPGEVGKRIYNEISKEAWAEWMKKQTMLINEKKLNMMNVDDRKLLEGEMIKFLFEGHDVHIEGYTPPSE.

The protein belongs to the Fe(2+)-trafficking protein family. Monomer.

Functionally, could be a mediator in iron transactions between iron acquisition and iron-requiring processes, such as synthesis and/or repair of Fe-S clusters in biosynthetic enzymes. The chain is Probable Fe(2+)-trafficking protein from Serratia proteamaculans (strain 568).